Here is a 168-residue protein sequence, read N- to C-terminus: Probable chorismate pyruvate-lyase (168 aa).

Arginine 75, isoleucine 114, and glutamate 155 together coordinate substrate.

The protein belongs to the UbiC family.

It is found in the cytoplasm. The enzyme catalyses chorismate = 4-hydroxybenzoate + pyruvate. The protein operates within cofactor biosynthesis; ubiquinone biosynthesis. In terms of biological role, removes the pyruvyl group from chorismate, with concomitant aromatization of the ring, to provide 4-hydroxybenzoate (4HB) for the ubiquinone pathway. This chain is Probable chorismate pyruvate-lyase, found in Psychrobacter arcticus (strain DSM 17307 / VKM B-2377 / 273-4).